The chain runs to 240 residues: MAPK-interacting and spindle-stabilizing protein-like (240 aa).

The interval 1–240 (MSDEFSLADA…PMPGGPHSYH (240 aa)) is disordered. Residue Ser2 is modified to N-acetylserine. Ser2, Ser6, and Ser15 each carry phosphoserine. Residues 16–26 (PAKTSAVSNTK) show a composition bias toward polar residues. A compositionally biased stretch (low complexity) spans 34–43 (WPGSNPWNNP). 4 stretches are compositionally biased toward pro residues: residues 44–66 (SAPP…PFGP), 74–122 (SVPP…PELP), 159–185 (PNMP…PPVP), and 193–202 (AWGPPAPYPA).

It belongs to the MISS family.

The chain is MAPK-interacting and spindle-stabilizing protein-like (MAPK1IP1L) from Bos taurus (Bovine).